Consider the following 1007-residue polypeptide: Tolloid-like protein 1 (1007 aa).

The signal sequence occupies residues 1 to 25 (MNMPSWLIFLLTGWTFCGNFFACGG). The propeptide occupies 26–142 (LDYDYPNYEN…GKSKKIRIPR (117 aa)). Residues 115–139 (SGQENTTANSQKVDNNQSGKSKKIR) form a disordered region. The segment covering 116–133 (GQENTTANSQKVDNNQSG) has biased composition (polar residues). Residues 143–342 (AATSRTERIW…AQARKLYRCP (200 aa)) form the Peptidase M12A domain. N-linked (GlcNAc...) asparagine glycosylation is present at asparagine 164. 4 cysteine pairs are disulfide-bonded: cysteine 185-cysteine 341, cysteine 205-cysteine 227, cysteine 207-cysteine 208, and cysteine 344-cysteine 370. Zn(2+) is bound at residue histidine 235. Glutamate 236 is a catalytic residue. 2 residues coordinate Zn(2+): histidine 239 and histidine 245. CUB domains are found at residues 344-456 (CGET…YEAI) and 457-569 (CGGE…FLKE). 2 N-linked (GlcNAc...) asparagine glycosylation sites follow: asparagine 354 and asparagine 385. Disulfide bonds link cysteine 397-cysteine 419, cysteine 457-cysteine 483, cysteine 510-cysteine 532, cysteine 573-cysteine 585, cysteine 581-cysteine 594, cysteine 596-cysteine 609, cysteine 613-cysteine 639, cysteine 666-cysteine 688, cysteine 729-cysteine 740, cysteine 736-cysteine 749, cysteine 751-cysteine 764, cysteine 769-cysteine 795, cysteine 822-cysteine 844, cysteine 882-cysteine 912, and cysteine 939-cysteine 961. The EGF-like 1; calcium-binding domain occupies 569-610 (EEDECARPDNGGCEQRCVNTLGSYKCSCDPGYELAPDKKSCE). The CUB 3 domain maps to 613 to 725 (CGGLLTKLNG…KGFRAHFFSD (113 aa)). An N-linked (GlcNAc...) asparagine glycan is attached at asparagine 621. One can recognise an EGF-like 2; calcium-binding domain in the interval 725-765 (DKDECSKDNGGCQHECINTIGSYVCQCRNGFVLHDNKHDCK). CUB domains lie at 769–881 (CEHR…HSTE) and 882–998 (CGGR…YRSV).

Requires Zn(2+) as cofactor.

The protein resides in the secreted. In terms of biological role, protease which processes procollagen C-propeptides, such as chordin. Required for the embryonic development. Predominant protease, which in the development, influences dorsal-ventral patterning and skeletogenesis. This is Tolloid-like protein 1 (tll1) from Xenopus laevis (African clawed frog).